The chain runs to 603 residues: Sorting nexin-41 (603 aa).

Residues 1–36 form a disordered region; sequence MNSFRESDEEDNNPFSGTNHLYASGIGAVPEGDDDF. Residues 121–241 form the PX domain; that stretch reads AEGSLGALRI…QKFLNPEYIW (121 aa). A 1,2-diacyl-sn-glycero-3-phospho-(1D-myo-inositol-3-phosphate)-binding residues include Arg159, Ser161, Lys185, and Arg208.

Belongs to the sorting nexin family.

Its subcellular location is the endosome membrane. It localises to the endomembrane system. May be required for cytoplasm to vacuole transport (Cvt) and pexophagy. This is Sorting nexin-41 (SNX41) from Eremothecium gossypii (strain ATCC 10895 / CBS 109.51 / FGSC 9923 / NRRL Y-1056) (Yeast).